The following is a 238-amino-acid chain: ATP-dependent Clp protease proteolytic subunit 4 (238 aa).

The Nucleophile role is filled by Ser-113. The active site involves His-138.

The protein belongs to the peptidase S14 family. In terms of assembly, fourteen ClpP subunits assemble into 2 heptameric rings which stack back to back to give a disk-like structure with a central cavity, resembling the structure of eukaryotic proteasomes.

It is found in the cytoplasm. The catalysed reaction is Hydrolysis of proteins to small peptides in the presence of ATP and magnesium. alpha-casein is the usual test substrate. In the absence of ATP, only oligopeptides shorter than five residues are hydrolyzed (such as succinyl-Leu-Tyr-|-NHMec, and Leu-Tyr-Leu-|-Tyr-Trp, in which cleavage of the -Tyr-|-Leu- and -Tyr-|-Trp bonds also occurs).. In terms of biological role, cleaves peptides in various proteins in a process that requires ATP hydrolysis. Has a chymotrypsin-like activity. Plays a major role in the degradation of misfolded proteins. This chain is ATP-dependent Clp protease proteolytic subunit 4, found in Frankia casuarinae (strain DSM 45818 / CECT 9043 / HFP020203 / CcI3).